Consider the following 457-residue polypeptide: GTPase Der (457 aa).

2 consecutive EngA-type G domains span residues 4–169 (PTIA…PENN) and 177–352 (IMMS…NQHR). Residues 10–17 (GRPNVGKS), 57–61 (DTGGL), 120–123 (NKCE), 183–190 (GRPNVGKS), 230–234 (DTAGI), and 295–298 (NKWD) contribute to the GTP site. The KH-like domain maps to 353–438 (RRVTTSVVNE…PLILLWRGKQ (86 aa)).

Belongs to the TRAFAC class TrmE-Era-EngA-EngB-Septin-like GTPase superfamily. EngA (Der) GTPase family. In terms of assembly, associates with the 50S ribosomal subunit.

In terms of biological role, GTPase that plays an essential role in the late steps of ribosome biogenesis. The polypeptide is GTPase Der (Prochlorococcus marinus (strain AS9601)).